A 243-amino-acid chain; its full sequence is Orotidine 5'-phosphate decarboxylase (243 aa).

Residues Asp16, Lys38, Asp65–Thr74, Thr120, Arg181, Gln190, Gly210, and Arg211 contribute to the substrate site. Lys67 acts as the Proton donor in catalysis.

The protein belongs to the OMP decarboxylase family. Type 1 subfamily. As to quaternary structure, homodimer.

It carries out the reaction orotidine 5'-phosphate + H(+) = UMP + CO2. Its pathway is pyrimidine metabolism; UMP biosynthesis via de novo pathway; UMP from orotate: step 2/2. Catalyzes the decarboxylation of orotidine 5'-monophosphate (OMP) to uridine 5'-monophosphate (UMP). This Bradyrhizobium sp. (strain BTAi1 / ATCC BAA-1182) protein is Orotidine 5'-phosphate decarboxylase.